Reading from the N-terminus, the 626-residue chain is MAKKEFKAESKRLLDMMINSIYTQKEIFLRELISNSSDAIDKIYYKALTDDALTFDKDSYYIKVAADKDARTLTISDTGIGMTKDELEQHLGTIAKSGSLAFKKENELKDGHDIIGQFGVGFYAAFMVADVVTVISKALGSEEAYKWESAGADGYTIEPCEKDSVGTDIILKIKENTEDDSYDEFLEEYRLKAIIKKYSDFIRYPIKMDTTINKPKEGSENEFEEVQEEQTVNSMVPIWRKNKSELTDEDYEKFYAEKHYGFDKPLTHVHISVDGAVRYNAILFVPENMPFDYYSKEYEKGLELYSNGVLIMNKCADLLPDHFSFVKGMVDSEDLSLNISREMLQHDRQLKLIAKNISKKIKSELQSLLKKDREKYETFYKSFGRQLKFGVYNDFGANKDQLKDLLLFYSSKEKKLVSLDEYVSRMPEEQKFIYYATGDSYDRIEKLPQTEMVADKGYEILYFTEDIDEFAIKMLASYQEKEFKSVSSGDLGIDTDEDQKQSEEEESKYKDLFEEMKNILSDKVKNVRISKRLKSHPVCLAADGEVTIEMEKILNAMPDSQNVKAEKVLEINPNHEVFQTLQDAFEQDKEKLSLYTNLLYNQALLIEGLPIQDPVEFTNNICKVMV.

The a; substrate-binding stretch occupies residues 1–341 (MAKKEFKAES…SEDLSLNISR (341 aa)). The segment at 342-552 (EMLQHDRQLK…DGEVTIEMEK (211 aa)) is b. A c region spans residues 553 to 626 (ILNAMPDSQN…FTNNICKVMV (74 aa)).

Belongs to the heat shock protein 90 family. As to quaternary structure, homodimer.

The protein localises to the cytoplasm. In terms of biological role, molecular chaperone. Has ATPase activity. This Bacillus subtilis (strain 168) protein is Chaperone protein HtpG.